We begin with the raw amino-acid sequence, 570 residues long: Methionine--tRNA ligase (570 aa).

Positions 14–24 (PYINGIKHLGN) match the 'HIGH' region motif. Residues cysteine 146, cysteine 149, cysteine 159, and cysteine 162 each coordinate Zn(2+). The short motif at 347 to 351 (QFSTS) is the 'KMSKS' region element. Threonine 350 contacts ATP.

It belongs to the class-I aminoacyl-tRNA synthetase family. MetG type 1 subfamily. Monomer. It depends on Zn(2+) as a cofactor.

Its subcellular location is the cytoplasm. The catalysed reaction is tRNA(Met) + L-methionine + ATP = L-methionyl-tRNA(Met) + AMP + diphosphate. Its function is as follows. Is required not only for elongation of protein synthesis but also for the initiation of all mRNA translation through initiator tRNA(fMet) aminoacylation. This chain is Methionine--tRNA ligase, found in Jannaschia sp. (strain CCS1).